A 347-amino-acid polypeptide reads, in one-letter code: Selenide, water dikinase (347 aa).

Sec-17 is a catalytic residue. Sec-17 is a non-standard amino acid (selenocysteine). ATP is bound by residues Lys-20 and 48 to 50 (TAD). Asp-51 lines the Mg(2+) pocket. ATP contacts are provided by residues Asp-68, Asp-91, and 139-141 (GHS). Asp-91 contributes to the Mg(2+) binding site. Asp-227 is a binding site for Mg(2+).

This sequence belongs to the selenophosphate synthase 1 family. Class I subfamily. In terms of assembly, homodimer. It depends on Mg(2+) as a cofactor.

It carries out the reaction hydrogenselenide + ATP + H2O = selenophosphate + AMP + phosphate + 2 H(+). Synthesizes selenophosphate from selenide and ATP. This is Selenide, water dikinase from Haemophilus influenzae (strain 86-028NP).